Consider the following 503-residue polypeptide: MESLLAAGAGGIGVAAAAAVVAATLAVVPPKDRGNNPPPAVPGLPVIGNMHQLKEKKPHHTFTKWSKTYGPIYTIKTGASSVVVLNSTEVAKEAMIEKFSSISTKKLPKALSVISRKNMVSISDYGDFYKMAKRNIMLAILGFNAQKHFCDTRERMVSNVLSSLHKLVAVDPHSPLNFREVYTTELFGLSLIQNLGEDVCSVYVEEFGREISKEEIFHVLVHEILSCVVEPDWRDYFPYLSWLPNKSFETIVSSTEFRRDAVMNALIKRQKERIARGEARISYIDFLLEAKNSTQLTDHQLMLLLAESIAAAVDTVLVTTEWAMYELAKNPDKQEWLYREIREVCGGKAVTEEDLPRLPYLDAVLHETLRLHSPVPVLPTRFVHDDTTLAGYDVPAGTQVMINVFGCHMDEEAWESPGEWSPERFLGEGFKLADRYKTLAFGAGRRTCAGSQQAVSIACVAIARFVQELQWTLREGDGDKEDTMQYTALKLHPLHVHLKPRGS.

Residues 8–28 (GAGGIGVAAAAAVVAATLAVV) traverse the membrane as a helical segment. Cys448 contributes to the heme binding site.

Belongs to the cytochrome P450 family. The cofactor is heme. As to expression, expressed in roots.

It localises to the membrane. May hydroxylate diterpenes. The protein is Ent-kaurene oxidase-like 5 of Oryza sativa subsp. japonica (Rice).